Reading from the N-terminus, the 487-residue chain is Homeobox protein homothorax (487 aa).

Disordered stretches follow at residues 25–49, 210–292, and 333–369; these read YDPH…HMTH, DTTK…SSLN, and NFGT…QKKR. Positions 127 to 211 constitute an MEIS N-terminal domain; that stretch reads GGDVCSSESF…IDLVIDERDT (85 aa). Polar residues-rich tracts occupy residues 227 to 237 and 333 to 345; these read NADSTSHTDGA and NFGT…ASNA. The homeobox; TALE-type DNA-binding region spans 365–427; sequence NQKKRGIFPK…NARRRIVQPM (63 aa).

The protein belongs to the TALE/MEIS homeobox family. Interacts with exd; required for nuclear translocation of exd. In terms of tissue distribution, in the wing disk, the expression is present in the regions corresponding to notum, wing hinge and ventral pleura. In the leg disk, the expression is in the periphery region, corresponding to the proximal segments of the legs. In the antennal disk, the expression is in all but the arista region. In the eye disk, the expression is strong in the anterior region surrounding the eye field, including the regions corresponding to ptilinum, ocellus and head capsules, and weak in the posterior and lateral margins of the eye disk. Expressed specifically in maturating inner photoreceptors of the DRA and maintained through adulthood.

It localises to the nucleus. All isoforms are required for patterning of the embryonic cuticle. Acts with exd to delimit the eye field and prevent inappropriate eye development. Isoforms that carry the homeodomain are required for proper localization of chordotonal organs within the peripheral nervous system and antennal identity; required to activate antennal-specific genes, such as sal and to repress the leg-like expression of dac. Necessary for the nuclear localization of the essential HOX cofactor, extradenticle (exd). Both necessary and sufficient for inner photoreceptors to adopt the polarization-sensitive 'dorsal rim area' (DRA) of the eye fate instead of the color-sensitive default state. This occurs by increasing rhabdomere size and uncoupling R7-R8 communication to allow both cells to express the same opsin rather than different ones as required for color vision. The polypeptide is Homeobox protein homothorax (Drosophila melanogaster (Fruit fly)).